A 170-amino-acid chain; its full sequence is Peptide deformylase (170 aa).

The Fe cation site is built by Cys94 and His136. The active site involves Glu137. His140 provides a ligand contact to Fe cation.

Belongs to the polypeptide deformylase family. Requires Fe(2+) as cofactor.

It catalyses the reaction N-terminal N-formyl-L-methionyl-[peptide] + H2O = N-terminal L-methionyl-[peptide] + formate. Functionally, removes the formyl group from the N-terminal Met of newly synthesized proteins. Requires at least a dipeptide for an efficient rate of reaction. N-terminal L-methionine is a prerequisite for activity but the enzyme has broad specificity at other positions. The chain is Peptide deformylase from Xylella fastidiosa (strain M12).